Here is a 210-residue protein sequence, read N- to C-terminus: ATP-dependent Clp protease proteolytic subunit (210 aa).

The Nucleophile role is filled by serine 107. The active site involves histidine 132.

It belongs to the peptidase S14 family. As to quaternary structure, fourteen ClpP subunits assemble into 2 heptameric rings which stack back to back to give a disk-like structure with a central cavity, resembling the structure of eukaryotic proteasomes.

It localises to the cytoplasm. The enzyme catalyses Hydrolysis of proteins to small peptides in the presence of ATP and magnesium. alpha-casein is the usual test substrate. In the absence of ATP, only oligopeptides shorter than five residues are hydrolyzed (such as succinyl-Leu-Tyr-|-NHMec, and Leu-Tyr-Leu-|-Tyr-Trp, in which cleavage of the -Tyr-|-Leu- and -Tyr-|-Trp bonds also occurs).. Functionally, cleaves peptides in various proteins in a process that requires ATP hydrolysis. Has a chymotrypsin-like activity. Plays a major role in the degradation of misfolded proteins. The chain is ATP-dependent Clp protease proteolytic subunit from Chromobacterium violaceum (strain ATCC 12472 / DSM 30191 / JCM 1249 / CCUG 213 / NBRC 12614 / NCIMB 9131 / NCTC 9757 / MK).